Reading from the N-terminus, the 602-residue chain is Zinc finger MYND domain-containing protein 11 (602 aa).

The SAMD1-like winged helix (WH) domain maps to 6-82 (KRRQADTKAI…CKGSKAGIEQ (77 aa)). The PHD-type zinc finger occupies 100 to 148 (DWYCFECHLPGEVLICDLCFRVYHSKCLSDEFRLRDSSSPWQCPVCRSI). The Bromo domain maps to 149 to 255 (KKKNTNKQEM…KDTCHELDEL (107 aa)). Positions 258, 261, 277, and 281 each coordinate Zn(2+). Residues 280–331 (NHELVWAKMKGFGFWPAKVMQKEDNQVDVRFFGHHHQRAWIPSENIQDITVN) enclose the PWWP domain. Lys366 is covalently cross-linked (Glycyl lysine isopeptide (Lys-Gly) (interchain with G-Cter in SUMO2)). The interval 366 to 459 (KNEDRGEEEA…MLHRSTQTTN (94 aa)) is disordered. The short motif at 394 to 400 (RAKKGRR) is the Nuclear localization signal element. Residues Lys407 and Lys408 each participate in a glycyl lysine isopeptide (Lys-Gly) (interchain with G-Cter in SUMO2) cross-link. Phosphoserine is present on Ser421. Polar residues predominate over residues 435-459 (SVSTQTKKLSASSPRMLHRSTQTTN). The interaction with human adenovirus E1A stretch occupies residues 452 to 572 (HRSTQTTNDG…CYNCEEEAMY (121 aa)). Zn(2+)-binding residues include Cys563, Cys566, Cys574, Cys575, Cys581, Cys585, His594, and Cys598. The MYND-type zinc finger occupies 563-598 (CYNCEEEAMYHCCWNTSYCSIKCQQEHWHAEHKRTC).

As to quaternary structure, homooligomer; forms homooligomers via its C-terminus. Interacts with histone H3.3 trimethylated at 'Lys-36' (H3.3K36me3). Interacts (via MYND-type zinc finger) with NCOR1. Interacts (via MYND-type zinc finger) with MGA protein (via PXLXP motif). Interacts (via MYND-type zinc finger) with EZH2. Interacts with EMSY and E2F6. Interacts with PIAS1 and UBE2I. (Microbial infection) Interacts (via MYND-type zinc finger) with human adenovirus early E1A protein (via PXLXP motif); this interaction inhibits E1A mediated transactivation. In terms of assembly, (Microbial infection) Interacts (via MYND-type zinc finger) with Epstein-Barr virus EBNA2 protein (via PXLXP motif). Interacts with Epstein-Barr virus-derived protein LMP1; leading to negatively regulate NF-kappa-B activation by Epstein-Barr virus-derived protein LMP1. Post-translationally, sumoylated following its interaction with PIAS1 and UBE2I. Ubiquitinated, leading to proteasomal degradation. Ubiquitous.

Its subcellular location is the nucleus. It localises to the chromosome. Its function is as follows. Chromatin reader that specifically recognizes and binds histone H3.3 trimethylated at 'Lys-36' (H3.3K36me3) and regulates RNA polymerase II elongation. Does not bind other histone H3 subtypes (H3.1 or H3.2). Colocalizes with highly expressed genes and functions as a transcription corepressor by modulating RNA polymerase II at the elongation stage. Binds non-specifically to dsDNA. Acts as a tumor-suppressor by repressing a transcriptional program essential for tumor cell growth. Functionally, (Microbial infection) Inhibits Epstein-Barr virus EBNA2-mediated transcriptional activation and host cell proliferation, through direct interaction. The sequence is that of Zinc finger MYND domain-containing protein 11 from Homo sapiens (Human).